We begin with the raw amino-acid sequence, 281 residues long: Bifunctional protein FolD (281 aa).

Residues 164 to 166, Ser189, and Ile230 contribute to the NADP(+) site; that span reads GRS.

This sequence belongs to the tetrahydrofolate dehydrogenase/cyclohydrolase family. In terms of assembly, homodimer.

The catalysed reaction is (6R)-5,10-methylene-5,6,7,8-tetrahydrofolate + NADP(+) = (6R)-5,10-methenyltetrahydrofolate + NADPH. It catalyses the reaction (6R)-5,10-methenyltetrahydrofolate + H2O = (6R)-10-formyltetrahydrofolate + H(+). The protein operates within one-carbon metabolism; tetrahydrofolate interconversion. Its function is as follows. Catalyzes the oxidation of 5,10-methylenetetrahydrofolate to 5,10-methenyltetrahydrofolate and then the hydrolysis of 5,10-methenyltetrahydrofolate to 10-formyltetrahydrofolate. The sequence is that of Bifunctional protein FolD from Pelagibacter ubique (strain HTCC1062).